The following is a 265-amino-acid chain: Putative 2-aminoethylphosphonate transport system permease protein PhnV (265 aa).

6 helical membrane passes run 13-33, 69-89, 104-124, 131-151, 185-205, and 233-253; these read GVVA…VILM, LTIG…AALA, VFYL…LVAF, MNGT…AFTF, LPLL…LSMG, and NIAD…LLMM. The region spanning 65–253 is the ABC transmembrane type-1 domain; the sequence is LLASLTIGFC…LVAITLLLMM (189 aa).

Belongs to the binding-protein-dependent transport system permease family.

It is found in the cell inner membrane. Probably part of the PhnSTUV complex (TC 3.A.1.11.5) involved in 2-aminoethylphosphonate import. Probably responsible for the translocation of the substrate across the membrane. The chain is Putative 2-aminoethylphosphonate transport system permease protein PhnV (phnV) from Salmonella typhimurium (strain LT2 / SGSC1412 / ATCC 700720).